A 154-amino-acid chain; its full sequence is Ascorbate-specific PTS system EIIA component (154 aa).

The 145-residue stretch at 6-150 folds into the PTS EIIA type-2 domain; the sequence is SLAENKSIRL…QEVLDLIDRT (145 aa). H68 functions as the Tele-phosphohistidine intermediate in the catalytic mechanism. Phosphohistidine is present on H68.

Its subcellular location is the cytoplasm. Its function is as follows. The phosphoenolpyruvate-dependent sugar phosphotransferase system (sugar PTS), a major carbohydrate active transport system, catalyzes the phosphorylation of incoming sugar substrates concomitantly with their translocation across the cell membrane. The enzyme II UlaABC PTS system is involved in ascorbate transport. The sequence is that of Ascorbate-specific PTS system EIIA component (ulaC) from Shigella flexneri.